The following is a 388-amino-acid chain: Protein TsgA homolog (388 aa).

The next 12 membrane-spanning stretches (helical) occupy residues 11 to 31, 50 to 70, 77 to 97, 101 to 121, 133 to 153, 160 to 180, 206 to 226, 244 to 264, 268 to 288, 298 to 318, 332 to 352, and 360 to 380; these read WISFLSYAFTGALVVVTGMIM, TFLNAGILVSIFINSWLIEII, IFSFILTIIAVIGIVLCNSIF, INMFILGLVSGITMSIGTFII, LLLLTDSFFSMSGMIFPIVTA, IIWYWSYICIGAIYLLIFLLT, VFLLSISALLYILGQLGFISW, SLVSGFWMSYMLGMWFFSFII, NLYRMFIFLTSMSTILMYCFI, YIIISLGFFSSAIYTIIITLA, LILLFGTIGTFLTFIITSPIV, and TLISSNILYGIVFFLSILIYF.

The protein belongs to the major facilitator superfamily. TsgA family.

It localises to the cell membrane. The polypeptide is Protein TsgA homolog (Buchnera aphidicola subsp. Acyrthosiphon pisum (strain 5A)).